Reading from the N-terminus, the 352-residue chain is Very-long-chain 3-oxoacyl-CoA reductase (352 aa).

A helical membrane pass occupies residues 20-40 (TLWFIFIFGLLKLVPFALRFL). Positions 66, 120, 147, 228, 232, 261, and 263 each coordinate NADP(+). Tyrosine 228 acts as the Proton donor in catalysis. Lysine 232 acts as the Lowers pKa of active site Tyr in catalysis.

This sequence belongs to the short-chain dehydrogenases/reductases (SDR) family.

Its subcellular location is the endoplasmic reticulum membrane. The enzyme catalyses a very-long-chain (3R)-3-hydroxyacyl-CoA + NADP(+) = a very-long-chain 3-oxoacyl-CoA + NADPH + H(+). It functions in the pathway lipid metabolism; fatty acid biosynthesis. Component of the microsomal membrane bound fatty acid elongation system, which produces the 26-carbon very long-chain fatty acids (VLCFA) from palmitate. Catalyzes the reduction of the 3-ketoacyl-CoA intermediate that is formed in each cycle of fatty acid elongation. VLCFAs serve as precursors for ceramide and sphingolipids. This is Very-long-chain 3-oxoacyl-CoA reductase from Candida glabrata (strain ATCC 2001 / BCRC 20586 / JCM 3761 / NBRC 0622 / NRRL Y-65 / CBS 138) (Yeast).